A 666-amino-acid polypeptide reads, in one-letter code: Probable potassium transport system protein Kup (666 aa).

12 consecutive transmembrane segments (helical) span residues 16 to 36, 58 to 78, 100 to 120, 141 to 161, 165 to 185, 221 to 241, 253 to 273, 292 to 312, 343 to 363, 373 to 393, 399 to 419, and 424 to 444; these read GFII…LYTM, ISLI…LIAL, PWLI…GALT, IYQN…VLFG, FGTG…FSFL, IFIL…YSDL, WPFV…WILA, LTVY…QALI, LYIP…VLYF, YGLA…YYLI, PFLA…FFWA, and FMHG…VMFI.

It belongs to the HAK/KUP transporter (TC 2.A.72) family.

Its subcellular location is the cell membrane. The enzyme catalyses K(+)(in) + H(+)(in) = K(+)(out) + H(+)(out). Functionally, transport of potassium into the cell. Likely operates as a K(+):H(+) symporter. This is Probable potassium transport system protein Kup from Streptococcus pyogenes serotype M5 (strain Manfredo).